We begin with the raw amino-acid sequence, 72 residues long: Small ribosomal subunit protein bS18c (72 aa).

Belongs to the bacterial ribosomal protein bS18 family. As to quaternary structure, part of the 30S ribosomal subunit.

The protein resides in the plastid. Its subcellular location is the chloroplast. In Thalassiosira pseudonana (Marine diatom), this protein is Small ribosomal subunit protein bS18c.